We begin with the raw amino-acid sequence, 257 residues long: S-methyl-5'-thioadenosine phosphorylase (257 aa).

Phosphate is bound by residues S10, 50–51 (RH), and 83–84 (TA). Position 180 (M180) interacts with substrate. T181 provides a ligand contact to phosphate. Position 204-206 (204-206 (DYD)) interacts with substrate.

It belongs to the PNP/MTAP phosphorylase family. MTAP subfamily. As to quaternary structure, homohexamer. Dimer of a homotrimer.

It catalyses the reaction S-methyl-5'-thioadenosine + phosphate = 5-(methylsulfanyl)-alpha-D-ribose 1-phosphate + adenine. The enzyme catalyses adenosine + phosphate = alpha-D-ribose 1-phosphate + adenine. It participates in amino-acid biosynthesis; L-methionine biosynthesis via salvage pathway; S-methyl-5-thio-alpha-D-ribose 1-phosphate from S-methyl-5'-thioadenosine (phosphorylase route): step 1/1. Catalyzes the reversible phosphorylation of S-methyl-5'-thioadenosine (MTA) to adenine and 5-methylthioribose-1-phosphate. Involved in the breakdown of MTA, a major by-product of polyamine biosynthesis. Responsible for the first step in the methionine salvage pathway after MTA has been generated from S-adenosylmethionine. Has broad substrate specificity with 6-aminopurine nucleosides as preferred substrates. Can also use adenosine as substrate to form ribose 1-phosphate. This chain is S-methyl-5'-thioadenosine phosphorylase, found in Thermococcus kodakarensis (strain ATCC BAA-918 / JCM 12380 / KOD1) (Pyrococcus kodakaraensis (strain KOD1)).